Reading from the N-terminus, the 731-residue chain is 1,4-alpha-glucan branching enzyme GlgB (731 aa).

Asp411 (nucleophile) is an active-site residue. Catalysis depends on Glu464, which acts as the Proton donor.

This sequence belongs to the glycosyl hydrolase 13 family. GlgB subfamily. In terms of assembly, monomer.

It carries out the reaction Transfers a segment of a (1-&gt;4)-alpha-D-glucan chain to a primary hydroxy group in a similar glucan chain.. The protein operates within glycan biosynthesis; glycogen biosynthesis. Its function is as follows. Catalyzes the formation of the alpha-1,6-glucosidic linkages in glycogen by scission of a 1,4-alpha-linked oligosaccharide from growing alpha-1,4-glucan chains and the subsequent attachment of the oligosaccharide to the alpha-1,6 position. The polypeptide is 1,4-alpha-glucan branching enzyme GlgB (Mycobacterium bovis (strain ATCC BAA-935 / AF2122/97)).